We begin with the raw amino-acid sequence, 79 residues long: Sulfur carrier protein TusA (79 aa).

Cysteine 15 functions as the Cysteine persulfide intermediate in the catalytic mechanism.

The protein belongs to the sulfur carrier protein TusA family. In terms of assembly, interacts with IscS.

It localises to the cytoplasm. The protein operates within tRNA modification. Sulfur carrier protein involved in sulfur trafficking in the cell. Part of a sulfur-relay system required for 2-thiolation during synthesis of 2-thiouridine of the modified wobble base 5-methylaminomethyl-2-thiouridine (mnm(5)s(2)U) in tRNA. Interacts with IscS and stimulates its cysteine desulfurase activity. Accepts an activated sulfur from IscS, which is then transferred to TusD, and thus determines the direction of sulfur flow from IscS to 2-thiouridine formation. Also appears to be involved in sulfur transfer for the biosynthesis of molybdopterin. This chain is Sulfur carrier protein TusA, found in Buchnera aphidicola subsp. Baizongia pistaciae (strain Bp).